An 88-amino-acid polypeptide reads, in one-letter code: Cell division topological specificity factor (88 aa).

It belongs to the MinE family.

Functionally, prevents the cell division inhibition by proteins MinC and MinD at internal division sites while permitting inhibition at polar sites. This ensures cell division at the proper site by restricting the formation of a division septum at the midpoint of the long axis of the cell. The chain is Cell division topological specificity factor from Aromatoleum aromaticum (strain DSM 19018 / LMG 30748 / EbN1) (Azoarcus sp. (strain EbN1)).